The sequence spans 363 residues: NADH-quinone oxidoreductase subunit H (363 aa).

10 helical membrane passes run 29–49, 62–82, 94–114, 127–147, 166–186, 202–222, 239–257, 264–286, 293–313, and 339–359; these read VLKI…YVVW, GPMY…KLLF, AIFV…WAVV, VGLL…ILAG, VVSY…AAGS, FFDW…VSGV, IVAG…LFFL, ILVS…QGWV, LIDW…LFFA, and FIPL…SGVI.

Belongs to the complex I subunit 1 family. NDH-1 is composed of 14 different subunits. Subunits NuoA, H, J, K, L, M, N constitute the membrane sector of the complex.

Its subcellular location is the cell inner membrane. It carries out the reaction a quinone + NADH + 5 H(+)(in) = a quinol + NAD(+) + 4 H(+)(out). NDH-1 shuttles electrons from NADH, via FMN and iron-sulfur (Fe-S) centers, to quinones in the respiratory chain. The immediate electron acceptor for the enzyme in this species is believed to be ubiquinone. Couples the redox reaction to proton translocation (for every two electrons transferred, four hydrogen ions are translocated across the cytoplasmic membrane), and thus conserves the redox energy in a proton gradient. This subunit may bind ubiquinone. This Xylella fastidiosa (strain Temecula1 / ATCC 700964) protein is NADH-quinone oxidoreductase subunit H.